Here is a 148-residue protein sequence, read N- to C-terminus: MSIILKIKKTDDAKDLPLPAYMSEGAAGMDLYANVKEEVILQPGEIKLIPTGIQIELPPNFEAQIRPRSGLALNYGITLLNTPGTIDSDYRGEIKLIVINLGKEAVKIARGQRIAQMVINQIVRPTIVEAEILSETKRDEGGFGHTGI.

Substrate is bound by residues 68 to 70, Asn81, 85 to 87, and Lys95; these read RSG and TID.

The protein belongs to the dUTPase family. Requires Mg(2+) as cofactor.

The enzyme catalyses dUTP + H2O = dUMP + diphosphate + H(+). Its pathway is pyrimidine metabolism; dUMP biosynthesis; dUMP from dCTP (dUTP route): step 2/2. This enzyme is involved in nucleotide metabolism: it produces dUMP, the immediate precursor of thymidine nucleotides and it decreases the intracellular concentration of dUTP so that uracil cannot be incorporated into DNA. The polypeptide is Deoxyuridine 5'-triphosphate nucleotidohydrolase (Thermoanaerobacter sp. (strain X514)).